A 65-amino-acid chain; its full sequence is Large ribosomal subunit protein bL35 (65 aa).

This sequence belongs to the bacterial ribosomal protein bL35 family.

The protein is Large ribosomal subunit protein bL35 of Heliobacterium modesticaldum (strain ATCC 51547 / Ice1).